Consider the following 239-residue polypeptide: Ribosomal RNA small subunit methyltransferase G (239 aa).

Residues Gly79, Phe84, 130 to 131, and Arg149 contribute to the S-adenosyl-L-methionine site; that span reads AE.

The protein belongs to the methyltransferase superfamily. RNA methyltransferase RsmG family.

The protein resides in the cytoplasm. Specifically methylates the N7 position of a guanine in 16S rRNA. The chain is Ribosomal RNA small subunit methyltransferase G from Lactobacillus delbrueckii subsp. bulgaricus (strain ATCC BAA-365 / Lb-18).